A 1593-amino-acid chain; its full sequence is Laminin subunit gamma-1 (1593 aa).

The first 19 residues, Met1 to Gly19, serve as a signal peptide directing secretion. The Laminin N-terminal domain occupies Arg30–Arg269. 2 N-linked (GlcNAc...) asparagine glycosylation sites follow: Asn44 and Asn118. Cystine bridges form between Cys270–Cys279, Cys272–Cys289, Cys291–Cys300, Cys303–Cys323, Cys326–Cys335, Cys328–Cys351, Cys354–Cys363, Cys366–Cys379, Cys382–Cys394, Cys384–Cys400, Cys402–Cys411, Cys414–Cys426, Cys429–Cys440, Cys431–Cys447, Cys449–Cys458, and Cys461–Cys476. Laminin EGF-like domains follow at residues Cys270–Pro325, Cys326–Ser381, Cys382–Pro428, and Cys429–Pro478. Residues Arg505–Lys673 enclose the Laminin IV type A domain. 3 N-linked (GlcNAc...) asparagine glycosylation sites follow: Asn560, Asn634, and Asn654. 24 disulfides stabilise this stretch: Cys708–Cys717, Cys710–Cys724, Cys726–Cys735, Cys738–Cys754, Cys757–Cys765, Cys759–Cys776, Cys779–Cys788, Cys791–Cys809, Cys812–Cys826, Cys814–Cys833, Cys836–Cys845, Cys848–Cys865, Cys868–Cys882, Cys870–Cys889, Cys891–Cys900, Cys903–Cys916, Cys919–Cys931, Cys921–Cys938, Cys940–Cys949, Cys952–Cys964, Cys967–Cys979, Cys969–Cys985, Cys987–Cys996, and Cys999–Cys1012. Laminin EGF-like domains follow at residues Cys708–Ala756, Cys757–Ala811, Cys812–Pro867, Cys868–Arg918, Cys919–Pro966, and Cys967–Gln1014. 8 N-linked (GlcNAc...) asparagine glycosylation sites follow: Asn1006, Asn1091, Asn1159, Asn1189, Asn1207, Asn1254, Asn1364, and Asn1379. The domain II and I stretch occupies residues Gln1014–Pro1593. Residues Leu1021–Leu1580 are a coiled coil.

Laminin is a complex glycoprotein, consisting of three different polypeptide chains (alpha, beta, gamma), which are bound to each other by disulfide bonds into a cross-shaped molecule comprising one long and three short arms with globules at each end.

It is found in the secreted. Its subcellular location is the extracellular space. The protein resides in the extracellular matrix. It localises to the basement membrane. Functionally, binding to cells via a high affinity receptor, laminin is thought to mediate the attachment, migration and organization of cells into tissues during embryonic development by interacting with other extracellular matrix components. The chain is Laminin subunit gamma-1 (lamc1) from Danio rerio (Zebrafish).